The sequence spans 539 residues: Glucans biosynthesis protein D (539 aa).

Residues 1–31 constitute a signal peptide (tat-type signal); the sequence is MHRRNLLKASMALAAYTGLSASGLLAARAWA.

Belongs to the OpgD/OpgG family. Predicted to be exported by the Tat system. The position of the signal peptide cleavage has not been experimentally proven.

The protein resides in the periplasm. It functions in the pathway glycan metabolism; osmoregulated periplasmic glucan (OPG) biosynthesis. Its function is as follows. Probably involved in the control of the structural glucose backbone of osmoregulated periplasmic glucans (OPGs). The chain is Glucans biosynthesis protein D from Pseudomonas fluorescens (strain ATCC BAA-477 / NRRL B-23932 / Pf-5).